Reading from the N-terminus, the 230-residue chain is Ureidoacrylate amidohydrolase RutB (230 aa).

Residue D24 is the Proton acceptor of the active site. K133 is an active-site residue. C166 (nucleophile) is an active-site residue.

Belongs to the isochorismatase family. RutB subfamily.

The enzyme catalyses (Z)-3-ureidoacrylate + H2O + H(+) = (Z)-3-aminoacrylate + NH4(+) + CO2. It catalyses the reaction (Z)-3-ureidoacrylate + H2O = (Z)-3-aminoacrylate + carbamate + H(+). The catalysed reaction is (Z)-2-methylureidoacrylate + H2O + H(+) = (Z)-2-methylaminoacrylate + NH4(+) + CO2. Hydrolyzes ureidoacrylate to form aminoacrylate and carbamate. The carbamate hydrolyzes spontaneously, thereby releasing one of the nitrogen atoms of the pyrimidine ring as ammonia and one of its carbon atoms as CO2. The sequence is that of Ureidoacrylate amidohydrolase RutB from Escherichia coli (strain B / BL21-DE3).